The sequence spans 253 residues: Phosphoribosylaminoimidazole-succinocarboxamide synthase (253 aa).

Belongs to the SAICAR synthetase family.

It catalyses the reaction 5-amino-1-(5-phospho-D-ribosyl)imidazole-4-carboxylate + L-aspartate + ATP = (2S)-2-[5-amino-1-(5-phospho-beta-D-ribosyl)imidazole-4-carboxamido]succinate + ADP + phosphate + 2 H(+). Its pathway is purine metabolism; IMP biosynthesis via de novo pathway; 5-amino-1-(5-phospho-D-ribosyl)imidazole-4-carboxamide from 5-amino-1-(5-phospho-D-ribosyl)imidazole-4-carboxylate: step 1/2. In Jannaschia sp. (strain CCS1), this protein is Phosphoribosylaminoimidazole-succinocarboxamide synthase.